Reading from the N-terminus, the 494-residue chain is Probable malate:quinone oxidoreductase 3 (494 aa).

It belongs to the MQO family. FAD is required as a cofactor.

The catalysed reaction is (S)-malate + a quinone = a quinol + oxaloacetate. It functions in the pathway carbohydrate metabolism; tricarboxylic acid cycle; oxaloacetate from (S)-malate (quinone route): step 1/1. The chain is Probable malate:quinone oxidoreductase 3 from Staphylococcus epidermidis (strain ATCC 35984 / DSM 28319 / BCRC 17069 / CCUG 31568 / BM 3577 / RP62A).